The following is a 573-amino-acid chain: ATP-dependent RNA helicase RhlB (573 aa).

The Q motif motif lies at L9–A37. The Helicase ATP-binding domain maps to L40 to L220. A53–T60 provides a ligand contact to ATP. Residues D166–D169 carry the DEAD box motif. The region spanning R231–L393 is the Helicase C-terminal domain. Residues T391–T400 are compositionally biased toward low complexity. The segment at T391–L559 is disordered. The span at E402 to G411 shows a compositional bias: acidic residues. The span at R419–R432 shows a compositional bias: basic and acidic residues. Gly residues predominate over residues G435–G449. Over residues G450–P461 the composition is skewed to basic and acidic residues. The segment covering P476–A499 has biased composition (low complexity). A compositionally biased stretch (basic residues) spans P505–G514. 2 stretches are compositionally biased toward low complexity: residues P516 to P528 and V541 to L559.

Belongs to the DEAD box helicase family. RhlB subfamily. Component of the RNA degradosome, which is a multiprotein complex involved in RNA processing and mRNA degradation.

Its subcellular location is the cytoplasm. It catalyses the reaction ATP + H2O = ADP + phosphate + H(+). Its function is as follows. DEAD-box RNA helicase involved in RNA degradation. Has RNA-dependent ATPase activity and unwinds double-stranded RNA. This Xanthomonas campestris pv. campestris (strain B100) protein is ATP-dependent RNA helicase RhlB.